Reading from the N-terminus, the 316-residue chain is DnaJ homolog subfamily B member 13 (316 aa).

In terms of domain architecture, J spans 4–68 (DYYSVLGITR…MKRGIYDKFG (65 aa)).

As to quaternary structure, homodimer. Component of the axonemal radial spoke complex 1 (RS1), at least composed of spoke head proteins RSPH1, RSPH3, RSPH9 and the cilia-specific component RSPH4A or sperm-specific component RSPH6A, spoke stalk proteins RSPH14, DNAJB13, DYDC1, ROPN1L and NME5, and the anchor protein IQUB. Interacts with SUN5. Interacts with IQUB. As to expression, specifically expressed in testis and trachea.

The protein resides in the cell projection. The protein localises to the cilium. Its subcellular location is the flagellum. Functionally, functions as part of axonemal radial spoke complexes that play an important part in the motility of sperm and cilia. The polypeptide is DnaJ homolog subfamily B member 13 (DNAJB13) (Homo sapiens (Human)).